The following is a 495-amino-acid chain: Cyclic GMP-AMP synthase (495 aa).

The tract at residues 1–128 is disordered; the sequence is MAARRGKSTR…AGATELAAPA (128 aa). The DNA-binding stretch occupies residues 1–134; that stretch reads MAARRGKSTR…AAPARMEAPP (134 aa). Lys-7 carries the N6-acetyllysine modification. Phosphoserine is present on Ser-13. Basic and acidic residues-rich tracts occupy residues 52 to 76 and 105 to 116; these read CRRE…RAED and RAREARSARELR. The residue at position 56 (Lys-56) is an N6-acetyllysine. Ser-57 is subject to Phosphoserine. Residues 57-68 are required for association with the cell membrane; the sequence is SGPDPREKPQVR. A required for activation upon DNA viral infection region spans residues 103 to 134; sequence SCRAREARSARELRPQAGATELAAPARMEAPP. The Nuclear export signal signature appears at 143 to 148; sequence LEKVRL. At Lys-145 the chain carries N6-lactoyllysine. Residues 147 to 190 form a DNA-binding region; sequence RLSRHEISEAAEVVNWVVEHLLRRLQGGESEFKGVALLRTGSYY. A PolyADP-ribosyl glutamic acid modification is found at Glu-165. Thr-186 contacts GTP. Ser-188 carries the phosphoserine modification. Position 188 (Ser-188) interacts with ATP. Tyr-190 is modified (phosphotyrosine). 2 residues coordinate Mg(2+): Glu-200 and Asp-202. Asp-202 lines the 2',3'-cGAMP pocket. A Glycyl lysine isopeptide (Lys-Gly) (interchain with G-Cter in SUMO) cross-link involves residue Lys-206. Lys-260 participates in a covalent cross-link: Glycyl lysine isopeptide (Lys-Gly) (interchain with G-Cter in ubiquitin). 5-glutamyl polyglutamate is present on Glu-261. The short motif at 268–278 is the Nuclear localization signal element; that stretch reads GVTVERKRRGS. The residue at position 278 (Ser-278) is a Phosphoserine. Asp-294 contacts GTP. A Mg(2+)-binding site is contributed by Asp-294. Position 294 (Asp-294) interacts with 2',3'-cGAMP. The interval 316 to 357 is interaction with collided ribosomes; it reads SQWLGAKVKNNLKRQPFYLVPKHAKEGSGFQEETWRLSFSHI. Lys-322 participates in a covalent cross-link: Glycyl lysine isopeptide (Lys-Gly) (interchain with G-Cter in SUMO); alternate. Lys-322 is covalently cross-linked (Glycyl lysine isopeptide (Lys-Gly) (interchain with G-Cter in ubiquitin); alternate). Residues Lys-337 and Arg-351 each coordinate 2',3'-cGAMP. 351 to 358 is a binding site for GTP; it reads RLSFSHIE. Glu-358 lines the ATP pocket. Lys-359 bears the N6-acetyllysine mark. Lys-359 participates in a covalent cross-link: Glycyl lysine isopeptide (Lys-Gly) (interchain with G-Cter in SUMO); alternate. A Glycyl lysine isopeptide (Lys-Gly) (interchain with G-Cter in ubiquitin); alternate cross-link involves residue Lys-359. Residues 359 to 382 form a DNA-binding region; sequence KDILKNHGQSKTCCEIDGVKCCRK. His-365 is a Zn(2+) binding site. An N6-acetyllysine modification is found at Lys-369. Lys-369 participates in a covalent cross-link: Glycyl lysine isopeptide (Lys-Gly) (interchain with G-Cter in SUMO). Cys-371, Cys-372, and Cys-379 together coordinate Zn(2+). S-palmitoyl cysteine attachment occurs at residues Cys-379 and Cys-380. Residues Lys-386, Lys-389, Lys-396, and Lys-397 each participate in a glycyl lysine isopeptide (Lys-Gly) (interchain with G-Cter in ubiquitin) cross-link. Lys-389 carries the N6-acetyllysine modification. Lys-389 is a binding site for ATP. Position 410 is a phosphoserine (Ser-410). 410–414 contributes to the ATP binding site; sequence SYHVK. A lipid anchor (S-palmitoyl cysteine) is attached at Cys-449. N6-methyllysine is present on Lys-481.

Belongs to the mab-21 family. In terms of assembly, monomer in the absence of DNA. Homodimer in presence of dsDNA: forms a 2:2 dimer with two enzymes binding to two DNA molecules. Interacts with nucleosomes; interaction is mainly mediated via histones H2A and H2B and inactivates the nucleotidyltransferase activity by blocking DNA-binding and subsequent activation. Interacts with PQBP1 (via WW domain). Interacts with TRIM14; this interaction recruits USP14, leading to deubiquitinate and stabilize CGAS and promote type I interferon production. Interacts with ZCCHC3; promoting sensing of dsDNA by CGAS. Interacts (when not monomethylated) with (poly-ADP-ribosylated) PARP1; interaction takes place in the nucleus and prevents the formation of the PARP1-TIMELESS complex. Interacts (when monomethylated) with SGF29; interaction with SGF29 prevents interaction with PARP1. Interacts with PCBP2; preventing the formation of liquid-like droplets in which CGAS is activated. Interacts with IRGM; promoting CGAS degradation. Mg(2+) is required as a cofactor. Mn(2+) serves as cofactor. Requires Zn(2+) as cofactor. Post-translationally, the N-terminal disordered part (1-134) is phosphorylated by AURKB during the G2-M transition, blocking CGAS liquid phase separation and preventing activation. Phosphorylation at Tyr-190 by BLK promotes cytosolic retention. Localizes into the nucleus following dephosphorylation at Tyr-190. Phosphorylation at Ser-410 activates the nucleotidyltransferase activity. Dephosphorylation at Ser-410 by PPP6C impairs its ability to bind GTP, thereby inactivating it. Phosphorylation at Ser-188 by PRKDC inhibits its cyclic GMP-AMP synthase activity by impairing homodimerization and activation. Phosphorylation at Ser-278 by AKT (AKT1, AKT2 or AKT3) suppresses the nucleotidyltransferase activity. Phosphorylation at Ser-278 by CDK1 during mitosis leads to its inhibition, thereby preventing CGAS activation by self-DNA during mitosis. Dephosphorylated at Ser-278 by protein phosphatase PP1 upon mitotic exit. Ubiquitinated at Lys-389 via 'Lys-48'-linked polyubiquitin chains, leading to its SQSTM1-mediated autophagic degradation. Interaction with TRIM14 promotes recruitment of USP14, leading to deubiquitinate Lys-389 and stabilize CGAS. Ubiquitinated at Lys-359 by RNF185 via 'Lys-27'-linked polyubiquitination, promoting CGAS cyclic GMP-AMP synthase activity. Monoubiquitination at Lys-322 by TRIM56 promotes oligomerization and subsequent activation. Monoubiquitination by TRIM41 promotes CGAS activation. Ubiquitination at Lys-260 via 'Lys-48'-linked polyubiquitination promotes its degradation. Deubiquitination at Lys-260 by USP29 promotes its stabilization. Deubiquitinated by USP27X, promoting its stabilization. Ubiquitinated at Lys-386 via 'Lys-63'-linked polyubiquitin chains by MARCHF8, leading to the inhibition of its DNA binding ability. In cycling cells, nucleosome-bound CGAS is ubiquitinated at Lys-396 and Lys-397 via 'Lys-48'-linked polyubiquitin chains by the ECS(SPSB3) complex, leading to its degradation: ubiquitination and degradation of nuclear CGAS during G1 and G2 phases is required to promote low intranuclear CGAS abundance before the next mitotic cycle. In terms of processing, sumoylated at Lys-206 by TRIM38 in uninfected cells and during the early phase of viral infection, promoting its stability by preventing ubiquitination at Lys-260 and subsequent degradation. Desumoylated by SENP2 during the late phase of viral infection. Sumoylation at Lys-322, Lys-359 and Lys-369 prevents DNA-binding, oligomerization and nucleotidyltransferase activity. Desumoylation at Lys-322, Lys-359 and Lys-369 by SENP7 relieves inhibition and activates CGAS. Post-translationally, polyglutamylated by TTLL6 at Glu-261, leading to impair DNA-binding activity. Deglutamylated by AGBL5/CCP5 and AGBL6/CCP6. Acetylation at Lys-359, Lys-369 and Lys-389 inhibits the cyclic GMP-AMP synthase activity. Deacetylated upon cytosolic DNA challenge such as viral infections. Acetylation by KAT5 increases the cyclic GMP-AMP synthase activity by promoting DNA-binding and subsequent activation. In terms of processing, proteolytically cleaved by apoptotic caspases during apoptosis, leading to its inactivation. The damage of the nucleus and the mitochondria during apoptosis leads to leakage of nuclear and mitochondrial DNA, which activate CGAS: cleavage and inactivation during apoptosis in required to prevent cytokine overproduction. Cleaved by CASP7 and CASP3 during virus-induced apoptosis, thereby inactivating it and preventing cytokine overproduction. Cleaved by CASP1 upon DNA virus infection; the cleavage impairs cGAMP production. Also cleaved by the pyroptotic CASP4 during non-canonical inflammasome activation; does not cut at the same sites than CASP1. Post-translationally, degraded via selective autophagy following interaction with IRGM. IRGM promotes CGAS recruitment to autophagosome membranes, promoting its SQSTM1/p62-dependent autophagic degradation. Poly-ADP-ribosylation at Glu-165 by PARP1 impairs DNA-binding, thereby preventing the cyclic GMP-AMP synthase activity. In terms of processing, palmitoylation at Cys-449 by ZDHHC18 impairs DNA-binding, thereby preventing the cyclic GMP-AMP synthase activity. Palmitoylation at Cys-379 and Cys-380 by ZDHHC9 promotes homodimerization and cyclic GMP-AMP synthase activity. Depalmitoylation at Cys-379 and Cys-380 by LYPLAL1 impairs homodimerization and cyclic GMP-AMP synthase activity. Post-translationally, monomethylated at Lys-481 by SETD7. Monomethylation promotes interaction with SGF29, preventing interaction between PARP1 nad SGF29. Demethylation by RIOX1 promotes interaction with PARP1, followed by PARP1 inactivation. Lactylation by AARS2 prevents ability to undergo liquid-liquid phase separation (LLPS), thereby inhibiting CGAS activation.

It localises to the nucleus. The protein resides in the chromosome. The protein localises to the cell membrane. It is found in the cytoplasm. Its subcellular location is the cytosol. The catalysed reaction is GTP + ATP = 2',3'-cGAMP + 2 diphosphate. It carries out the reaction GTP + ATP = pppGp(2'-5')A + diphosphate. It catalyses the reaction pppGp(2'-5')A = 2',3'-cGAMP + diphosphate. The enzyme activity is strongly increased by double-stranded DNA (dsDNA), but not by single-stranded DNA or RNA. DNA-binding induces the formation of liquid-like droplets in which CGAS is activated. Liquid-like droplets also create a selective environment that restricts entry of negative regulators, such as TREX1 or BANF1/BAF, allowing sensing of DNA. A number of mechanisms exist to restrict its activity toward self-DNA. The nucleotidyltransferase activity is inhibited in the nucleus via its association with nucleosomes: interacts with the acidic patch of histones H2A and H2B, thereby blocking DNA-binding and subsequent activation. CGAS is also inactive when associated with mitotic chromatin. Chromatin-bound CGAS cannot be activated by exogenous DNA in mitotic cells: phosphorylation of the N-terminal disordered part by AURKB during the G2-M transition blocks CGAS liquid phase separation and activation. Activity toward self-DNA is inhibited by BANF1/BAF upon acute loss of nuclear membrane integrity: BANF1/BAF acts by outcompeting CGAS for DNA-binding, thereby preventing CGAS activation. DNA-induced activation at micronuclei is also limited by TREX1, which degrades micronuclear DNA upon nuclear envelope rupture, thereby preventing CGAS activation. CGAS can be released from nucleosomes and activated by MRE11 component of the MRN complex, which displaces CGAS from acidic-patch-mediated sequestration. Acetylation at Lys-359, Lys-369 and Lys-389 inhibits the cyclic GMP-AMP synthase activity. Acetylation by KAT5 increases the cyclic GMP-AMP synthase activity by promoting DNA-binding and subsequent activation. Phosphorylation at Ser-278 suppresses the nucleotidyltransferase activity. Phosphorylation at Ser-410 promotes the cyclic GMP-AMP synthase activity. Phosphorylation at Ser-188 inhibits its cyclic GMP-AMP synthase activity. Ubiquitination at Lys-359 via 'Lys-27'-linked polyubiquitination enhances the cyclic GMP-AMP synthase activity. Monoubiquitination at Lys-322 promotes oligomerization and subsequent activation. Sumoylation at Lys-322, Lys-359 and Lys-369 prevents DNA-binding, oligomerization and nucleotidyltransferase activity. The enzyme activity is impaired by the cleavage by CASP1. In addition to DNA, also activated by collided ribosomes upon translation stress: specifically binds collided ribosomes, promoting its activation and triggering type-I interferon production. Functionally, nucleotidyltransferase that catalyzes the formation of cyclic GMP-AMP (2',3'-cGAMP) from ATP and GTP and plays a key role in innate immunity. Catalysis involves both the formation of a 2',5' phosphodiester linkage at the GpA step and the formation of a 3',5' phosphodiester linkage at the ApG step, producing c[G(2',5')pA(3',5')p]. Acts as a key DNA sensor: directly binds double-stranded DNA (dsDNA), inducing the formation of liquid-like droplets in which CGAS is activated, leading to synthesis of 2',3'-cGAMP, a second messenger that binds to and activates STING1, thereby triggering type-I interferon production. Preferentially binds long dsDNA (around 45 bp) and forms ladder-like networks that function cooperatively to stabilize individual cGAS-dsDNA complexes. Acts as a key foreign DNA sensor, the presence of double-stranded DNA (dsDNA) in the cytoplasm being a danger signal that triggers the immune responses. Has antiviral activity by sensing the presence of dsDNA from DNA viruses in the cytoplasm. Also acts as an innate immune sensor of infection by retroviruses by detecting the presence of reverse-transcribed DNA in the cytosol. Detection of retroviral reverse-transcribed DNA in the cytosol may be indirect and be mediated via interaction with PQBP1, which directly binds reverse-transcribed retroviral DNA. Also detects the presence of DNA from bacteria. 2',3'-cGAMP can be transferred from producing cells to neighboring cells through gap junctions, leading to promote STING1 activation and convey immune response to connecting cells. 2',3'-cGAMP can also be transferred between cells by virtue of packaging within viral particles contributing to IFN-induction in newly infected cells in a cGAS-independent but STING1-dependent manner. Also senses the presence of neutrophil extracellular traps (NETs) that are translocated to the cytosol following phagocytosis, leading to synthesis of 2',3'-cGAMP. In addition to foreign DNA, can also be activated by endogenous nuclear or mitochondrial DNA. When self-DNA leaks into the cytosol during cellular stress (such as mitochondrial stress, DNA damage, mitotic arrest or senescence), or is present in form of cytosolic micronuclei, CGAS is activated leading to a state of sterile inflammation. Acts as a regulator of cellular senescence by binding to cytosolic chromatin fragments that are present in senescent cells, leading to trigger type-I interferon production via STING1 and promote cellular senescence. Also involved in the inflammatory response to genome instability and double-stranded DNA breaks: acts by localizing to micronuclei arising from genome instability. Micronuclei, which are frequently found in cancer cells, consist of chromatin surrounded by their own nuclear membrane: following breakdown of the micronuclear envelope, a process associated with chromothripsis, CGAS binds self-DNA exposed to the cytosol, leading to 2',3'-cGAMP synthesis and subsequent activation of STING1 and type-I interferon production. In a healthy cell, CGAS is however kept inactive even in cellular events that directly expose it to self-DNA, such as mitosis, when cGAS associates with chromatin directly after nuclear envelope breakdown or remains in the form of postmitotic persistent nuclear cGAS pools bound to chromatin. Nuclear CGAS is inactivated by chromatin via direct interaction with nucleosomes, which block CGAS from DNA binding and thus prevent CGAS-induced autoimmunity. Also acts as a suppressor of DNA repair in response to DNA damage: inhibits homologous recombination repair by interacting with PARP1, the CGAS-PARP1 interaction leading to impede the formation of the PARP1-TIMELESS complex. In addition to DNA, also sense translation stress: in response to translation stress, translocates to the cytosol and associates with collided ribosomes, promoting its activation and triggering type-I interferon production. The protein is Cyclic GMP-AMP synthase of Sus scrofa (Pig).